A 250-amino-acid polypeptide reads, in one-letter code: MSPAPPPSRGRIRPWLVVGDLVVAAMWVCAGALVKLAVYGVLGLGGRPEADAVKVALSLVYMFFFAWLEGFTGGASYNPLTVLAGALASRAGPSLYLFAAFVRMPAQVFGSILGVKLIRAALPKVGKGAPLSVGVHHGALAEGLATFMVVIVSVTLKKKEMKGFFMKTWISSIWKMTFHLLSSDITGGVMNPASAFAWAYARGDHTTFDHLLVYWLAPLQATLLGVWVVTLLTKPKKIEEEADESKTKKE.

The next 2 membrane-spanning stretches (helical) occupy residues 14–34 and 55–75; these read PWLVVGDLVVAAMWVCAGALV and VALSLVYMFFFAWLEGFTGGA. The short motif at 78-80 is the NPA 1 element; sequence NPL. The next 4 helical transmembrane spans lie at 95-115, 132-152, 178-200, and 211-231; these read LYLFAAFVRMPAQVFGSILGV, SVGVHHGALAEGLATFMVVIV, FHLLSSDITGGVMNPASAFAWAY, and LLVYWLAPLQATLLGVWVVTL. Positions 191-193 match the NPA 2 motif; it reads NPA.

It belongs to the MIP/aquaporin (TC 1.A.8) family. SIP (TC 1.A.8.10) subfamily. Expressed in leaves and anthers, and at lower levels in roots.

It is found in the membrane. In terms of biological role, aquaporins facilitate the transport of water and small neutral solutes across cell membranes. The sequence is that of Aquaporin SIP2-1 (SIP2-1) from Oryza sativa subsp. japonica (Rice).